A 762-amino-acid polypeptide reads, in one-letter code: Centrosomal protein of 85 kDa (762 aa).

2 disordered regions span residues 1-26 (MAMQ…IQKG) and 94-119 (VMPS…SKLP). Polar residues-rich tracts occupy residues 14–26 (HVTS…IQKG) and 98–111 (TLGT…STPV). Serine 17 carries the post-translational modification Phosphoserine. Phosphoserine occurs at positions 126 and 141. The segment at 257 to 433 (GLSKPLPSQV…QLIRESLKVA (177 aa)) is mediates interaction with NEK2 and is required for its function in the suppression of centrosome disjunction. Coiled coils occupy residues 334–657 (EHLL…RQAQ) and 723–750 (PDVI…MSDR). The tract at residues 434 to 476 (LQKHSEEVKKQEERVKGRDKHINNLKKKCQKESEQNREKQQRI) is required for centrosome localization and for its function in the suppression of centrosome disjunction. 2 stretches are compositionally biased toward basic and acidic residues: residues 443-455 (KQEE…DKHI) and 463-474 (QKESEQNREKQQ). Disordered regions lie at residues 443–474 (KQEE…EKQQ) and 541–570 (EAEF…VEME). Serine 623 carries the phosphoserine modification.

This sequence belongs to the CEP85 family. As to quaternary structure, homodimer. Interacts with STIL (via N-terminus); this interaction is essential for robust PLK4 activation and efficient centriole assembly and for PLK4-dependent cell migration. Interacts with PLK4; required for CEP85 to be able to drive centriole duplication and cell migration.

The protein localises to the cytoplasm. The protein resides in the cytoskeleton. Its subcellular location is the microtubule organizing center. It localises to the centrosome. It is found in the spindle pole. The protein localises to the nucleus. The protein resides in the nucleolus. Its subcellular location is the centriole. It localises to the cell cortex. Acts as a regulator of centriole duplication through a direct interaction with STIL, a key factor involved in the early steps of centriole formation. The CEP85-STIL protein complex acts as a modulator of PLK4-driven cytoskeletal rearrangements and directional cell motility. Acts as a negative regulator of NEK2 to maintain the centrosome integrity in interphase. Suppresses centrosome disjunction by inhibiting NEK2 kinase activity. The polypeptide is Centrosomal protein of 85 kDa (Homo sapiens (Human)).